The sequence spans 897 residues: Molybdenum import ATP-binding protein ModC 2 (897 aa).

The region spanning 6–236 (RGRIDAAFRG…PALPLAYSRD (231 aa)) is the ABC transporter domain. 38–45 (GPSGCGKT) lines the ATP pocket. A Mop domain is found at 295–365 (ESSILNILPA…VKGVSLVRAS (71 aa)). The tract at residues 823–848 (LGDRSVLGPREPDAGAKGRKRQNDPE) is disordered. A compositionally biased stretch (basic and acidic residues) spans 832–848 (REPDAGAKGRKRQNDPE).

It belongs to the ABC transporter superfamily. Molybdate importer (TC 3.A.1.8) family. As to quaternary structure, the complex is composed of two ATP-binding proteins (ModC), two transmembrane proteins (ModB) and a solute-binding protein (ModA).

The protein resides in the cell inner membrane. It carries out the reaction molybdate(out) + ATP + H2O = molybdate(in) + ADP + phosphate + H(+). In terms of biological role, part of the ABC transporter complex ModABC involved in molybdenum import. Responsible for energy coupling to the transport system. The chain is Molybdenum import ATP-binding protein ModC 2 from Bradyrhizobium diazoefficiens (strain JCM 10833 / BCRC 13528 / IAM 13628 / NBRC 14792 / USDA 110).